Here is a 153-residue protein sequence, read N- to C-terminus: Endoribonuclease RegB (153 aa).

Activity is stimulated 10- to 100-fold by host ribosomal protein S1, which also helps confer substrate choice. Functionally, essential to the early nucleolytic processing of a number of T4 messenger RNAs. Specifically cleaves after the GG dinucleotide GGAG within consensus 5'-GGAGRAYARAA-3' (R is a purine and Y is a pyrimidine) sequences found mainly in translation initiation sites. The polypeptide is Endoribonuclease RegB (regB) (Enterobacteria phage T4 (Bacteriophage T4)).